The following is a 359-amino-acid chain: Transaldolase (359 aa).

Catalysis depends on K139, which acts as the Schiff-base intermediate with substrate.

This sequence belongs to the transaldolase family. Type 2 subfamily.

It is found in the cytoplasm. The catalysed reaction is D-sedoheptulose 7-phosphate + D-glyceraldehyde 3-phosphate = D-erythrose 4-phosphate + beta-D-fructose 6-phosphate. It participates in carbohydrate degradation; pentose phosphate pathway; D-glyceraldehyde 3-phosphate and beta-D-fructose 6-phosphate from D-ribose 5-phosphate and D-xylulose 5-phosphate (non-oxidative stage): step 2/3. Transaldolase is important for the balance of metabolites in the pentose-phosphate pathway. This chain is Transaldolase, found in Thiobacillus denitrificans (strain ATCC 25259 / T1).